A 186-amino-acid polypeptide reads, in one-letter code: Peptidyl-tRNA hydrolase (186 aa).

Tyr14 contributes to the tRNA binding site. The Proton acceptor role is filled by His19. 3 residues coordinate tRNA: Phe64, Asn66, and Asn112.

The protein belongs to the PTH family. In terms of assembly, monomer.

The protein resides in the cytoplasm. It catalyses the reaction an N-acyl-L-alpha-aminoacyl-tRNA + H2O = an N-acyl-L-amino acid + a tRNA + H(+). Its function is as follows. Hydrolyzes ribosome-free peptidyl-tRNAs (with 1 or more amino acids incorporated), which drop off the ribosome during protein synthesis, or as a result of ribosome stalling. Functionally, catalyzes the release of premature peptidyl moieties from peptidyl-tRNA molecules trapped in stalled 50S ribosomal subunits, and thus maintains levels of free tRNAs and 50S ribosomes. This chain is Peptidyl-tRNA hydrolase, found in Anaplasma marginale (strain St. Maries).